The following is a 541-amino-acid chain: Tyrosine-protein kinase Yes (541 aa).

A compositionally biased stretch (basic and acidic residues) spans 1-20 (MGCIKSKEDKGPAMKYRTDN). Positions 1-43 (MGCIKSKEDKGPAMKYRTDNTPEPISSHVSHYGSDSSQATQSP) are disordered. The N-myristoyl glycine moiety is linked to residue Gly2. Cys3 carries S-palmitoyl cysteine; in membrane form lipidation. Residues 26-37 (SSHVSHYGSDSS) show a composition bias toward low complexity. An SH3 domain is found at 89–150 (GGVTVFVALY…PSNYVAPADS (62 aa)). The SH2 domain maps to 156–253 (WYFGKMGRKD…GLCHKLTTVC (98 aa)). One can recognise a Protein kinase domain in the interval 275-528 (LRLEVKLGQG…YIQSFLEDYF (254 aa)). Residues 281–289 (LGQGCFGEV) and Lys303 contribute to the ATP site. Residue Asp394 is the Proton acceptor of the active site. Tyr424 bears the Phosphotyrosine; by autocatalysis mark. Phosphotyrosine; by CSK is present on Tyr535.

Belongs to the protein kinase superfamily. Tyr protein kinase family. SRC subfamily. In terms of processing, autophosphorylation at Tyr-424 maintains enzyme activity. Palmitoylation at Cys-3 promotes membrane localization.

Its subcellular location is the cell membrane. It localises to the cytoplasm. The protein localises to the cytoskeleton. It is found in the microtubule organizing center. The protein resides in the centrosome. Its subcellular location is the cytosol. It localises to the cell junction. The enzyme catalyses L-tyrosyl-[protein] + ATP = O-phospho-L-tyrosyl-[protein] + ADP + H(+). Non-receptor protein tyrosine kinase that is involved in the regulation of cell growth and survival, apoptosis, cell-cell adhesion, cytoskeleton remodeling, differentiation, G2/M progression and cytokinesis. This Gallus gallus (Chicken) protein is Tyrosine-protein kinase Yes (YES1).